A 139-amino-acid polypeptide reads, in one-letter code: uncharacterized protein (139 aa).

A signal peptide spans 1-32; it reads MEFHDDKKNELQKKEEIITEAIDTLFQSSAFG. The sHSP domain occupies 44 to 139; that stretch reads SSLKDVQTTI…TLFFPKNKHE (96 aa).

This sequence belongs to the small heat shock protein (HSP20) family.

This is an uncharacterized protein from Bacillus subtilis (strain 168).